The following is an 86-amino-acid chain: Small ribosomal subunit protein bS20 (86 aa).

The disordered stretch occupies residues 1–25 (MANIKSQQKRNRTNERARLRNKAVK).

Belongs to the bacterial ribosomal protein bS20 family.

Functionally, binds directly to 16S ribosomal RNA. This chain is Small ribosomal subunit protein bS20, found in Mycobacterium bovis (strain ATCC BAA-935 / AF2122/97).